Consider the following 273-residue polypeptide: Formamidopyrimidine-DNA glycosylase (273 aa).

The active-site Schiff-base intermediate with DNA is the proline 2. Glutamate 3 (proton donor) is an active-site residue. Lysine 58 functions as the Proton donor; for beta-elimination activity in the catalytic mechanism. Positions 91, 109, and 154 each coordinate DNA. The segment at 239 to 273 adopts an FPG-type zinc-finger fold; it reads FVYARTGEPCRICNAPVRQIVQGQRSTFYCPNCQK. Arginine 263 (proton donor; for delta-elimination activity) is an active-site residue.

The protein belongs to the FPG family. In terms of assembly, monomer. The cofactor is Zn(2+).

The catalysed reaction is Hydrolysis of DNA containing ring-opened 7-methylguanine residues, releasing 2,6-diamino-4-hydroxy-5-(N-methyl)formamidopyrimidine.. The enzyme catalyses 2'-deoxyribonucleotide-(2'-deoxyribose 5'-phosphate)-2'-deoxyribonucleotide-DNA = a 3'-end 2'-deoxyribonucleotide-(2,3-dehydro-2,3-deoxyribose 5'-phosphate)-DNA + a 5'-end 5'-phospho-2'-deoxyribonucleoside-DNA + H(+). Involved in base excision repair of DNA damaged by oxidation or by mutagenic agents. Acts as a DNA glycosylase that recognizes and removes damaged bases. Has a preference for oxidized purines, such as 7,8-dihydro-8-oxoguanine (8-oxoG). Has AP (apurinic/apyrimidinic) lyase activity and introduces nicks in the DNA strand. Cleaves the DNA backbone by beta-delta elimination to generate a single-strand break at the site of the removed base with both 3'- and 5'-phosphates. In Herminiimonas arsenicoxydans, this protein is Formamidopyrimidine-DNA glycosylase.